The sequence spans 61 residues: Small ribosomal subunit protein uS14B (61 aa).

Zn(2+) is bound by residues cysteine 24, cysteine 27, cysteine 40, and cysteine 43.

This sequence belongs to the universal ribosomal protein uS14 family. Zinc-binding uS14 subfamily. Part of the 30S ribosomal subunit. Contacts proteins S3 and S10. Zn(2+) serves as cofactor.

In terms of biological role, binds 16S rRNA, required for the assembly of 30S particles and may also be responsible for determining the conformation of the 16S rRNA at the A site. This is Small ribosomal subunit protein uS14B from Bacillus licheniformis (strain ATCC 14580 / DSM 13 / JCM 2505 / CCUG 7422 / NBRC 12200 / NCIMB 9375 / NCTC 10341 / NRRL NRS-1264 / Gibson 46).